The sequence spans 928 residues: DENN domain-containing protein 2C (928 aa).

Disordered regions lie at residues 67 to 105 and 245 to 266; these read KSKN…YDDT and QSSL…IRGR. A compositionally biased stretch (basic and acidic residues) spans 85–105; that stretch reads ENTKSHDQSENENKKHEYDDT. Phosphoserine is present on S271. Positions 428–456 are disordered; that stretch reads KLHSYTGKELPPTKGETSGNESDAEYLPK. One can recognise a uDENN domain in the interval 492–641; it reads ELFVVVSLQK…PFPAPGRTIT (150 aa). In terms of domain architecture, cDENN spans 663 to 796; the sequence is RLEHVDFKCL…LQAALMQILE (134 aa). The region spanning 798–888 is the dDENN domain; that stretch reads RNEILTQEQN…QDRELRKSGV (91 aa).

Its function is as follows. Guanine nucleotide exchange factor (GEF) which may activate RAB9A and RAB9B. Promotes the exchange of GDP to GTP, converting inactive GDP-bound Rab proteins into their active GTP-bound form. The polypeptide is DENN domain-containing protein 2C (DENND2C) (Homo sapiens (Human)).